We begin with the raw amino-acid sequence, 695 residues long: Nucleoprotein (695 aa).

Coiled coils occupy residues 316 to 341 (VNVG…RRHE) and 372 to 399 (QTLA…VEDQ). Residues 424–611 (QARPMNRPTA…SPSAPQEDTR (188 aa)) form a disordered region. Over residues 438-447 (VDDKIEHEST) the composition is skewed to basic and acidic residues. Composition is skewed to polar residues over residues 495–505 (RQSQDLNNSQG) and 537–552 (TTDS…SDNE). A PTAP/PSAP motif motif is present at residues 603–606 (PSAP).

This sequence belongs to the filoviruses nucleoprotein family. In terms of assembly, homooligomer. Homomultimerizes to form the nucleocapsid. Binds to viral genomic RNA. Interacts with VP35 and VP30 to form the nucleocapsid. Also interacts with VP24 and VP40. In terms of processing, phosphorylated.

Its subcellular location is the virion. The protein localises to the host cytoplasm. Its function is as follows. Encapsidates the genome, protecting it from nucleases. The encapsidated genomic RNA is termed the nucleocapsid and serves as template for transcription and replication. During replication, encapsidation by NP is coupled to RNA synthesis and all replicative products are resistant to nucleases. This Chlorocebus aethiops (Green monkey) protein is Nucleoprotein (NP).